The sequence spans 257 residues: Isoprenyl transferase (257 aa).

D33 is an active-site residue. Residue D33 participates in Mg(2+) binding. Substrate contacts are provided by residues G34 to R37, W38, R46, H50, and S78 to E80. The active-site Proton acceptor is N81. Substrate contacts are provided by residues W82, R84, R204, and R210–S212. Residue E223 participates in Mg(2+) binding.

Belongs to the UPP synthase family. Homodimer. The cofactor is Mg(2+).

Catalyzes the condensation of isopentenyl diphosphate (IPP) with allylic pyrophosphates generating different type of terpenoids. This chain is Isoprenyl transferase, found in Clostridium acetobutylicum (strain ATCC 824 / DSM 792 / JCM 1419 / IAM 19013 / LMG 5710 / NBRC 13948 / NRRL B-527 / VKM B-1787 / 2291 / W).